Reading from the N-terminus, the 450-residue chain is C4-dicarboxylate transport protein (450 aa).

9 consecutive transmembrane segments (helical) span residues Ser10–Pro30, Leu46–Met66, Tyr78–Val98, Ile143–Gly163, Ile190–Ile210, Leu224–Ala244, Val291–Leu311, Ile332–Gly352, and Ile354–Ile374. The tract at residues Pro428–Val450 is disordered.

This sequence belongs to the dicarboxylate/amino acid:cation symporter (DAACS) (TC 2.A.23) family.

It is found in the cell inner membrane. Responsible for the transport of dicarboxylates such as succinate, fumarate, and malate from the periplasm across the membrane. This is C4-dicarboxylate transport protein from Pseudomonas syringae pv. syringae (strain B728a).